A 128-amino-acid polypeptide reads, in one-letter code: MFWKLPLLLGLLALGPHVCSWMFEDIGKTGQEFSMCVEFAIHHFNEHQPDENAYKLLWVRRSQHKKFSLTYLMDLHLGRTICKKHDEDIDNCPLQEGPEGKKVNCTFIVDSRPLYTKFTLLNSTCQQI.

An N-terminal signal peptide occupies residues 1-20 (MFWKLPLLLGLLALGPHVCS). An intrachain disulfide couples Cys-82 to Cys-92. An N-linked (GlcNAc...) asparagine glycan is attached at Asn-104. A disulfide bond links Cys-105 and Cys-125.

The protein belongs to the cystatin family.

The protein localises to the secreted. This chain is Probable cystatin-15, found in Bos taurus (Bovine).